We begin with the raw amino-acid sequence, 258 residues long: Snake venom serine protease CL2 (258 aa).

Residues 1–18 (MVLIRVLANLLIIQLSYA) form the signal peptide. The propeptide occupies 19-24 (QKSSEL). Residues 25-249 (VIGGDECNIN…YTDWIKSIIA (225 aa)) form the Peptidase S1 domain. 6 disulfide bridges follow: Cys31–Cys163, Cys50–Cys66, Cys98–Cys256, Cys142–Cys210, Cys174–Cys189, and Cys200–Cys225. Asn44 carries N-linked (GlcNAc...) asparagine glycosylation. The active-site Charge relay system is His65. The N-linked (GlcNAc...) asparagine glycan is linked to Asn103. The Charge relay system role is filled by Asp110. The N-linked (GlcNAc...) asparagine glycan is linked to Asn121. Residue Ser204 is the Charge relay system of the active site. N-linked (GlcNAc...) asparagine glycosylation is present at Asn251.

Belongs to the peptidase S1 family. Snake venom subfamily. As to quaternary structure, monomer. Expressed by the venom gland.

It is found in the secreted. In terms of biological role, snake venom serine protease that may act in the hemostasis system of the prey. In Trimeresurus stejnegeri (Chinese green tree viper), this protein is Snake venom serine protease CL2.